A 248-amino-acid polypeptide reads, in one-letter code: ATP synthase subunit a, chloroplastic (248 aa).

The next 5 membrane-spanning stretches (helical) occupy residues 38–58, 96–116, 135–155, 200–220, and 221–241; these read QVLITSWIVIAVLLGSATLAV, VPFIGTMFLFIFVSNWAGALF, INTTVALALLTSVAYFYAGFT, LVVAVLVSLVPIVVPIPVMFL, and GLFTSGIQALIFATLAAAYIG.

It belongs to the ATPase A chain family. As to quaternary structure, F-type ATPases have 2 components, CF(1) - the catalytic core - and CF(0) - the membrane proton channel. CF(1) has five subunits: alpha(3), beta(3), gamma(1), delta(1), epsilon(1). CF(0) has four main subunits: a, b, b' and c.

The protein resides in the plastid. It localises to the chloroplast thylakoid membrane. Functionally, key component of the proton channel; it plays a direct role in the translocation of protons across the membrane. This Cryptomeria japonica (Japanese cedar) protein is ATP synthase subunit a, chloroplastic.